A 270-amino-acid polypeptide reads, in one-letter code: Transmembrane protein 176B (270 aa).

4 helical membrane-spanning segments follow: residues 65-85 (LALG…GVCL), 95-115 (ASGC…GAIV), 127-147 (ISSL…VLCV), and 209-229 (LFLA…GVGL). Phosphoserine occurs at positions 236, 245, 254, and 258. The segment at 237 to 270 (SQPLNEEGSEKRLLGENSVPPSPSREQTSTAIVL) is disordered. Positions 260 to 270 (SREQTSTAIVL) are enriched in polar residues.

The protein belongs to the TMEM176 family. As to expression, expressed in lung and dermal fibroblasts.

The protein localises to the nucleus membrane. Functionally, may play a role in the process of maturation of dendritic cells. Required for the development of cerebellar granule cells. This chain is Transmembrane protein 176B (TMEM176B), found in Homo sapiens (Human).